The sequence spans 1438 residues: Membrane-anchored lipid-binding protein YSP2 (1438 aa).

Residues 1–17 (MRDEATRKKRSFSDGHF) are compositionally biased toward basic and acidic residues. 7 disordered regions span residues 1–97 (MRDE…SHTP), 174–194 (KVKH…NERP), 200–219 (QKDD…SAPN), 285–308 (QQQH…QNPN), 338–418 (TSGP…KVKF), 455–485 (DENN…LGPK), and 505–543 (SQSN…RYSS). Topologically, residues 1–1277 (MRDEATRKKR…SAFSMLQQVN (1277 aa)) are cytoplasmic. S13 is subject to Phosphoserine. A compositionally biased stretch (basic residues) spans 18–29 (FKKLKLMSRKKQ). A compositionally biased stretch (basic and acidic residues) spans 30–44 (PVMERSKTTRTRKES). The span at 45–58 (TNSAAKSSLSLRRA) shows a compositional bias: low complexity. Over residues 74–97 (IGSTNEGVAGNSGSNSPAQYSHTP) the composition is skewed to polar residues. Composition is skewed to low complexity over residues 286–298 (QQHP…GPLP) and 374–398 (PTNT…ANSN). S411 is modified (phosphoserine). Low complexity predominate over residues 455–470 (DENNTNNNPNASSTNL). The span at 471–485 (SHISKSNVNNNLGPK) shows a compositional bias: polar residues. Phosphoserine is present on S596. One can recognise a GRAM domain in the interval 648 to 716 (EFHTLFKDCD…KEIVQIEKKT (69 aa)). Positions 777–843 (SSSAFFDDSD…LGPNKHSPTT (67 aa)) are disordered. Positions 783–800 (DDSDDNDDDGDLDDDDPD) are enriched in acidic residues. Residues 818–832 (NESNDLGKNQKSTNY) show a composition bias toward polar residues. Residues 851-1018 (NDHLVIEANI…EIKKILSDED (168 aa)) form the VASt 1 domain. At S1032 the chain carries Phosphoserine. A VASt 2 domain is found at 1059–1225 (DDTVIDEKIN…DLKKIISNAS (167 aa)). The disordered stretch occupies residues 1225-1257 (SSTKKKSRRRGKTVNKRKSSPSTIKNEKNEENF). Residues 1227–1243 (TKKKSRRRGKTVNKRKS) show a composition bias toward basic residues. A helical transmembrane segment spans residues 1278–1298 (ITSVQGIMTIISFFICLIFFF). The Lumenal segment spans residues 1299 to 1438 (RLLFHSKNTS…DNTSATNQLL (140 aa)). Residues N1306, N1373, and N1430 are each glycosylated (N-linked (GlcNAc...) asparagine).

The protein belongs to the YSP2 family.

The protein resides in the mitochondrion membrane. The protein localises to the endoplasmic reticulum membrane. Functionally, involved in induction of programmed cell death in response to reactive oxygen species (ROS). May be involved in sterol transfer between intracellular membranes. The chain is Membrane-anchored lipid-binding protein YSP2 from Saccharomyces cerevisiae (strain ATCC 204508 / S288c) (Baker's yeast).